The chain runs to 174 residues: Repair DNA polymerase X (174 aa).

The segment at 42 to 51 is involved in ssDNA binding; the sequence is REEKMLNDVD. Positions 49 and 51 each coordinate Mg(2+). A disulfide bridge links Cys81 with Cys86. Asp100 lines the Mg(2+) pocket.

It belongs to the DNA polymerase type-X family. The cofactor is Mg(2+).

It is found in the virion. The enzyme catalyses DNA(n) + a 2'-deoxyribonucleoside 5'-triphosphate = DNA(n+1) + diphosphate. Its function is as follows. Error-prone polymerase lacking a proofreading 3'-5' exonuclease which catalyzes the gap-filling reaction during the DNA repair process. Specifically binds intermediates in the single-nucleotide base-excision repair process. Also catalyzes DNA polymerization with low nucleotide-insertion fidelity. Probably acts as a strategic DNA mutase, which gives rise to a rapid emergence of variants. Generates mismatched G-G pairs, in that case, the polymerase first binds the deoxynucleotide followed by mismatch formation. Together with the viral DNA ligase, fills the single nucleotide gaps generated by the AP endonuclease. Binds DNA with high affinity via the helix alphaE. The polypeptide is Repair DNA polymerase X (African swine fever virus (isolate Tick/South Africa/Pretoriuskop Pr4/1996) (ASFV)).